The primary structure comprises 479 residues: Membrane-bound lytic murein transglycosylase F (479 aa).

The signal sequence occupies residues 1–18; that stretch reads MKGLFIRIVLAICLSLWA. Positions 19–266 are non-LT domain; sequence IDMVFPWQQI…RIEEKYFNHL (248 aa). The tract at residues 267 to 479 is LT domain; that stretch reads NQFDYVDTRS…ISTQTQQEQR (213 aa). Glu311 is an active-site residue.

The protein in the N-terminal section; belongs to the bacterial solute-binding protein 3 family. This sequence in the C-terminal section; belongs to the transglycosylase Slt family.

The protein localises to the cell outer membrane. The catalysed reaction is Exolytic cleavage of the (1-&gt;4)-beta-glycosidic linkage between N-acetylmuramic acid (MurNAc) and N-acetylglucosamine (GlcNAc) residues in peptidoglycan, from either the reducing or the non-reducing ends of the peptidoglycan chains, with concomitant formation of a 1,6-anhydrobond in the MurNAc residue.. Functionally, murein-degrading enzyme that degrades murein glycan strands and insoluble, high-molecular weight murein sacculi, with the concomitant formation of a 1,6-anhydromuramoyl product. Lytic transglycosylases (LTs) play an integral role in the metabolism of the peptidoglycan (PG) sacculus. Their lytic action creates space within the PG sacculus to allow for its expansion as well as for the insertion of various structures such as secretion systems and flagella. This is Membrane-bound lytic murein transglycosylase F from Histophilus somni (strain 2336) (Haemophilus somnus).